Consider the following 217-residue polypeptide: Small ribosomal subunit protein uS3 (217 aa).

Positions 38–106 constitute a KH type-2 domain; it reads IRQLIQTKLA…QVHINIVEIK (69 aa).

This sequence belongs to the universal ribosomal protein uS3 family. In terms of assembly, part of the 30S ribosomal subunit. Forms a tight complex with proteins S10 and S14.

Its function is as follows. Binds the lower part of the 30S subunit head. Binds mRNA in the 70S ribosome, positioning it for translation. The polypeptide is Small ribosomal subunit protein uS3 (Lactococcus lactis subsp. cremoris (strain MG1363)).